Here is a 158-residue protein sequence, read N- to C-terminus: NADH-quinone oxidoreductase subunit B (158 aa).

4 residues coordinate [4Fe-4S] cluster: cysteine 37, cysteine 38, cysteine 102, and cysteine 132.

The protein belongs to the complex I 20 kDa subunit family. As to quaternary structure, NDH-1 is composed of 14 different subunits. Subunits NuoB, C, D, E, F, and G constitute the peripheral sector of the complex. [4Fe-4S] cluster serves as cofactor.

It is found in the cell inner membrane. The enzyme catalyses a quinone + NADH + 5 H(+)(in) = a quinol + NAD(+) + 4 H(+)(out). In terms of biological role, NDH-1 shuttles electrons from NADH, via FMN and iron-sulfur (Fe-S) centers, to quinones in the respiratory chain. Couples the redox reaction to proton translocation (for every two electrons transferred, four hydrogen ions are translocated across the cytoplasmic membrane), and thus conserves the redox energy in a proton gradient. The polypeptide is NADH-quinone oxidoreductase subunit B (Alkalilimnicola ehrlichii (strain ATCC BAA-1101 / DSM 17681 / MLHE-1)).